Consider the following 218-residue polypeptide: MNGGGQQGGFFGLLVIIIPVILLIVFFSKKKNSQKTEFGGEGGSRASKKDEVWKTVKQFLQEQNERGKEIIKTFVAKNPNPLHSRKDRQFFNQEVQAYITAHNLSKTAAKRYRHEQLKLKQRELYCIYFITKDAKTSVFDEARIIEAEVYQKPNKTGKGAPERLIRILGLKNFNDEMKWIQPLMDREEKRKEKEEKRKRELAARQLKRQEKKKQKTSK.

A compositionally biased stretch (basic and acidic residues) spans 184–202; sequence MDREEKRKEKEEKRKRELA. A disordered region spans residues 184 to 218; it reads MDREEKRKEKEEKRKRELAARQLKRQEKKKQKTSK. Residues 205-218 are compositionally biased toward basic residues; sequence QLKRQEKKKQKTSK.

This is an uncharacterized protein from Mycoplasma pneumoniae (strain ATCC 29342 / M129 / Subtype 1) (Mycoplasmoides pneumoniae).